A 398-amino-acid chain; its full sequence is MNIHEYQAKALLKSFGAPVAEGVAIFSADEAEAAAKQLPGPLYVVKSQIHAGGRGKGKFKELGPDAKGGVRLAFSIDEVKSHVAEMLGNTLVTNQTGPAGKQVNRLYIEDGADIERELYLSLLVDRAVGQVAFVVSTEGGMDIETVAHDTPEKIISVAIDPEAGVTAANLEALTAALLLEGEAKADAEKLFPILYKAFVEKDMALLEVNPLIVMKNGRMRVLDAKMSFDGNALFRHEDVVALRDKTEEDAKEIEASKYDLAYVALDGNIGCMVNGAGLAMATMDIIKLYGAEPANFLDVGGGATKEKVTAAFKIITADPAVKGILVNIFGGIMKCDVIAEGVLAAVKDVGLTVPLVVRLEGTNVELGKKIINESGLNVISADDLDDAAQKIVAAVKAA.

The ATP-grasp domain maps to lysine 9–glutamate 254. ATP contacts are provided by residues lysine 46, glycine 53–glycine 55, glutamate 109, alanine 112, and glutamate 117. Residues asparagine 209 and aspartate 223 each coordinate Mg(2+). Substrate-binding positions include asparagine 274 and glycine 331–methionine 333.

This sequence belongs to the succinate/malate CoA ligase beta subunit family. Heterotetramer of two alpha and two beta subunits. It depends on Mg(2+) as a cofactor.

The enzyme catalyses succinate + ATP + CoA = succinyl-CoA + ADP + phosphate. It catalyses the reaction GTP + succinate + CoA = succinyl-CoA + GDP + phosphate. Its pathway is carbohydrate metabolism; tricarboxylic acid cycle; succinate from succinyl-CoA (ligase route): step 1/1. Functionally, succinyl-CoA synthetase functions in the citric acid cycle (TCA), coupling the hydrolysis of succinyl-CoA to the synthesis of either ATP or GTP and thus represents the only step of substrate-level phosphorylation in the TCA. The beta subunit provides nucleotide specificity of the enzyme and binds the substrate succinate, while the binding sites for coenzyme A and phosphate are found in the alpha subunit. The chain is Succinate--CoA ligase [ADP-forming] subunit beta from Allorhizobium ampelinum (strain ATCC BAA-846 / DSM 112012 / S4) (Agrobacterium vitis (strain S4)).